The following is a 341-amino-acid chain: Protein-glutamate methylesterase/protein-glutamine glutaminase 2 (341 aa).

Positions 7–120 (KTLIVDDSLL…NRDLDSFFSE (114 aa)) constitute a Response regulatory domain. A 4-aspartylphosphate modification is found at aspartate 58. The CheB-type methylesterase domain occupies 155–341 (VIAIGASTGG…QALYKLINQL (187 aa)). Catalysis depends on residues serine 161, histidine 187, and aspartate 283.

The protein belongs to the CheB family. In terms of processing, phosphorylated by CheA. Phosphorylation of the N-terminal regulatory domain activates the methylesterase activity.

Its subcellular location is the cytoplasm. The catalysed reaction is [protein]-L-glutamate 5-O-methyl ester + H2O = L-glutamyl-[protein] + methanol + H(+). It catalyses the reaction L-glutaminyl-[protein] + H2O = L-glutamyl-[protein] + NH4(+). Functionally, involved in chemotaxis. Part of a chemotaxis signal transduction system that modulates chemotaxis in response to various stimuli. Catalyzes the demethylation of specific methylglutamate residues introduced into the chemoreceptors (methyl-accepting chemotaxis proteins or MCP) by CheR. Also mediates the irreversible deamidation of specific glutamine residues to glutamic acid. This chain is Protein-glutamate methylesterase/protein-glutamine glutaminase 2, found in Syntrophomonas wolfei subsp. wolfei (strain DSM 2245B / Goettingen).